We begin with the raw amino-acid sequence, 107 residues long: U1-lycotoxin-Ls1n (107 aa).

Residues M1 to S20 form the signal peptide. A propeptide spanning residues E21–R41 is cleaved from the precursor. 4 disulfides stabilise this stretch: C44/C59, C51/C68, C58/C86, and C70/C84.

It belongs to the neurotoxin 19 (CSTX) family. 04 (U1-Lctx) subfamily. Expressed by the venom gland.

The protein localises to the secreted. This is U1-lycotoxin-Ls1n from Lycosa singoriensis (Wolf spider).